A 374-amino-acid chain; its full sequence is Ribosomal RNA large subunit methyltransferase G (374 aa).

It belongs to the methyltransferase superfamily. RlmG family.

Its subcellular location is the cytoplasm. It carries out the reaction guanosine(1835) in 23S rRNA + S-adenosyl-L-methionine = N(2)-methylguanosine(1835) in 23S rRNA + S-adenosyl-L-homocysteine + H(+). In terms of biological role, specifically methylates the guanine in position 1835 (m2G1835) of 23S rRNA. This is Ribosomal RNA large subunit methyltransferase G from Pseudomonas aeruginosa (strain UCBPP-PA14).